The sequence spans 1381 residues: Hepatocyte growth factor receptor (1381 aa).

The signal sequence occupies residues 1–24; that stretch reads MKAPAVLAPGILVLLFTLVQRSNG. Residues 25–932 are Extracellular-facing; that stretch reads ECKEALAKSE…VIVQPDQNFT (908 aa). The Sema domain occupies 27 to 515; it reads KEALAKSEMN…TGKKITKIPL (489 aa). N45 is a glycosylation site (N-linked (GlcNAc...) asparagine). Cystine bridges form between C95-C101, C98-C160, C133-C141, and C172-C175. The N-linked (GlcNAc...) asparagine glycan is linked to N106. N-linked (GlcNAc...) asparagine glycosylation is present at N149. Residue N202 is glycosylated (N-linked (GlcNAc...) asparagine). Disulfide bonds link C298–C363 and C385–C397. N-linked (GlcNAc...) asparagine glycans are attached at residues N399 and N405. Cystine bridges form between C520–C538, C526–C561, C529–C545, and C541–C551. IPT/TIG domains are found at residues 563 to 655, 657 to 739, and 742 to 836; these read PAIY…FSYV, PIIT…FSYR, and PIVY…LIYV. A glycan (O-linked (Man) threonine) is linked at T582. Residues N607 and N635 are each glycosylated (N-linked (GlcNAc...) asparagine). O-linked (Man) threonine glycans are attached at residues T676 and T761. N-linked (GlcNAc...) asparagine glycosylation is found at N785, N879, and N930. A helical membrane pass occupies residues 933–955; that stretch reads GLIAGVVSISIALLLLLGLFLWL. Over 956–1381 the chain is Cytoplasmic; that stretch reads KKRKQIKDLG…EDNADDEVDT (426 aa). A Phosphoserine modification is found at S966. Residue T977 is modified to Phosphothreonine. S990, S997, and S1000 each carry phosphoserine. Y1003 is subject to Phosphotyrosine. The region spanning 1078–1345 is the Protein kinase domain; that stretch reads VHFNEVIGRG…RISAIFSTFI (268 aa). Residues 1084–1092 and K1110 each bind ATP; that span reads IGRGHFGCV. The Proton acceptor role is filled by D1204. The segment at 1212-1381 is interaction with RANBP9; that stretch reads LDEKFTVKVA…EDNADDEVDT (170 aa). Residue Y1230 is modified to Phosphotyrosine. Phosphotyrosine; by autocatalysis is present on residues Y1234 and Y1235. T1289 carries the phosphothreonine modification. Positions 1320-1359 are interaction with MUC20; that stretch reads WHPKAEMRPSFSELVSRISAIFSTFIGEHYVHVNATYVNV. A phosphotyrosine; by autocatalysis mark is found at Y1349 and Y1356. Phosphotyrosine is present on Y1365.

It belongs to the protein kinase superfamily. Tyr protein kinase family. Heterodimer made of an alpha chain (50 kDa) and a beta chain (145 kDa) which are disulfide linked. Binds PLXNB1. Interacts when phosphorylated with downstream effectors including STAT3, PIK3R1, SRC, PCLG1, GRB2 and GAB1. Interacts with SPSB1, SPSB2 and SPSB4. Interacts with INPP5D/SHIP1. When phosphorylated at Tyr-1356, interacts with INPPL1/SHIP2. Interacts with RANBP9 and RANBP10, as well as SPSB1, SPSB2, SPSB3 and SPSB4. SPSB1 binding occurs in the presence and in the absence of HGF, however HGF treatment has a positive effect on this interaction. Interacts with MUC20; prevents interaction with GRB2 and suppresses hepatocyte growth factor-induced cell proliferation. Interacts with GRB10. Interacts with PTPN1 and PTPN2. Interacts with HSP90AA1 and HSP90AB1; the interaction suppresses MET kinase activity. Interacts with tensin TNS3. Interacts (when phosphorylated) with tensin TNS4 (via SH2 domain); the interaction increases MET protein stability by inhibiting MET endocytosis and subsequent lysosomal degradation. Autophosphorylated in response to ligand binding on Tyr-1234 and Tyr-1235 in the kinase domain leading to further phosphorylation of Tyr-1349 and Tyr-1356 in the C-terminal multifunctional docking site. Dephosphorylated by PTPRJ at Tyr-1349 and Tyr-1365. Dephosphorylated by PTPN1 and PTPN2. In terms of processing, ubiquitinated. Ubiquitination by CBL regulates the receptor stability and activity through proteasomal degradation. Post-translationally, O-mannosylation of IPT/TIG domains by TMEM260 is required for protein maturation. O-mannosylated residues are composed of single mannose glycans that are not elongated or modified.

The protein resides in the membrane. It catalyses the reaction L-tyrosyl-[protein] + ATP = O-phospho-L-tyrosyl-[protein] + ADP + H(+). In its inactive state, the C-terminal tail interacts with the catalytic domain and inhibits the kinase activity. Upon ligand binding, the C-terminal tail is displaced and becomes phosphorylated, thus increasing the kinase activity. Its function is as follows. Receptor tyrosine kinase that transduces signals from the extracellular matrix into the cytoplasm by binding to hepatocyte growth factor/HGF ligand. Regulates many physiological processes including proliferation, scattering, morphogenesis and survival. Ligand binding at the cell surface induces autophosphorylation of MET on its intracellular domain that provides docking sites for downstream signaling molecules. Following activation by ligand, interacts with the PI3-kinase subunit PIK3R1, PLCG1, SRC, GRB2, STAT3 or the adapter GAB1. Recruitment of these downstream effectors by MET leads to the activation of several signaling cascades including the RAS-ERK, PI3 kinase-AKT, or PLCgamma-PKC. The RAS-ERK activation is associated with the morphogenetic effects while PI3K/AKT coordinates prosurvival effects. During embryonic development, MET signaling plays a role in gastrulation, development and migration of muscles and neuronal precursors, angiogenesis and kidney formation. In adults, participates in wound healing as well as organ regeneration and tissue remodeling. Also promotes differentiation and proliferation of hematopoietic cells. The sequence is that of Hepatocyte growth factor receptor (MET) from Colobus guereza (Mantled guereza).